The primary structure comprises 313 residues: Olfactory receptor 5D18 (313 aa).

The Extracellular segment spans residues 1-26 (MLLTDRNTSGTTFTLLGFSDYPELQV). A glycan (N-linked (GlcNAc...) asparagine) is linked at N7. Residues 27 to 47 (PLFLVFLAIYNVTVLGNIGLI) traverse the membrane as a helical segment. Topologically, residues 48 to 55 (VIIKINPK) are cytoplasmic. The helical transmembrane segment at 56–76 (LHTPMYFFLSQLSFVDFCYSS) threads the bilayer. At 77–100 (IIAPKMLVNLVVKDRTISFLGCVV) the chain is on the extracellular side. An intrachain disulfide couples C98 to C190. The helical transmembrane segment at 101–121 (QFFFFCTFVVTESFLLAVMAY) threads the bilayer. The Cytoplasmic portion of the chain corresponds to 122-140 (DRFVAICNPLLYTVNMSQK). Residues 141-161 (LCVLLVVGSYAWGVSCSLELT) traverse the membrane as a helical segment. The Extracellular portion of the chain corresponds to 162-197 (CSALKLCFHGFNTINHFFCEFSSLLSLSCSDTYINQ). A helical transmembrane segment spans residues 198–218 (WLLFFLATFNEISTLLIVLTS). The Cytoplasmic portion of the chain corresponds to 219-238 (YAFIVVTILKMRSVSGRRKA). A helical membrane pass occupies residues 239–259 (FSTCASHLTAITIFHGTILFL). The Extracellular portion of the chain corresponds to 260 to 272 (YCVPNSKNSRHTV). The chain crosses the membrane as a helical span at residues 273-293 (KVASVFYTVVIPMLNPLIYSL). The Cytoplasmic portion of the chain corresponds to 294–313 (RNKDVKDTVTEILDTKVFSY).

It belongs to the G-protein coupled receptor 1 family.

It is found in the cell membrane. Its function is as follows. Odorant receptor. In Homo sapiens (Human), this protein is Olfactory receptor 5D18 (OR5D18).